The following is a 58-amino-acid chain: UPF0391 membrane protein ABO_0024 (58 aa).

2 helical membrane passes run 4-24 (WALT…GGIA) and 28-48 (ASIA…SLVV).

It belongs to the UPF0391 family.

It localises to the cell membrane. The protein is UPF0391 membrane protein ABO_0024 of Alcanivorax borkumensis (strain ATCC 700651 / DSM 11573 / NCIMB 13689 / SK2).